The chain runs to 88 residues: Kunitz-type U15-theraphotoxin-Hs1d (88 aa).

A signal peptide spans 1 to 27 (MGTARFLSAVLLLSVLLMVTFPALLSA). Residues 28–33 (EYHDGR) constitute a propeptide that is removed on maturation. One can recognise a BPTI/Kunitz inhibitor domain in the interval 37 to 85 (CSLPSDSGDCLRFFEMWYFDGTTCTKFVYGGYGGNGNRFPTEKACMKRC). 2 cysteine pairs are disulfide-bonded: cysteine 37–cysteine 85 and cysteine 60–cysteine 81.

It belongs to the venom Kunitz-type family. 03 (sub-Kunitz) subfamily. Expressed by the venom gland.

It localises to the secreted. Serine protease inhibitor that inhibits trypsin at a molar ratio of 1:1. This is Kunitz-type U15-theraphotoxin-Hs1d from Cyriopagopus schmidti (Chinese bird spider).